The following is a 213-amino-acid chain: Pyridoxine/pyridoxamine 5'-phosphate oxidase (213 aa).

FMN contacts are provided by residues 60-65 (RMVLMK), 75-76 (YS), lysine 82, and glutamine 104. Lysine 65 serves as a coordination point for substrate. 2 residues coordinate substrate: tyrosine 122 and arginine 126. FMN contacts are provided by residues 139–140 (QS) and tryptophan 184. Residue 190–192 (RLH) participates in substrate binding. Arginine 194 contributes to the FMN binding site.

The protein belongs to the pyridoxamine 5'-phosphate oxidase family. As to quaternary structure, homodimer. Requires FMN as cofactor.

It carries out the reaction pyridoxamine 5'-phosphate + O2 + H2O = pyridoxal 5'-phosphate + H2O2 + NH4(+). The enzyme catalyses pyridoxine 5'-phosphate + O2 = pyridoxal 5'-phosphate + H2O2. Its pathway is cofactor metabolism; pyridoxal 5'-phosphate salvage; pyridoxal 5'-phosphate from pyridoxamine 5'-phosphate: step 1/1. It participates in cofactor metabolism; pyridoxal 5'-phosphate salvage; pyridoxal 5'-phosphate from pyridoxine 5'-phosphate: step 1/1. Its function is as follows. Catalyzes the oxidation of either pyridoxine 5'-phosphate (PNP) or pyridoxamine 5'-phosphate (PMP) into pyridoxal 5'-phosphate (PLP). This is Pyridoxine/pyridoxamine 5'-phosphate oxidase from Rhodopseudomonas palustris (strain BisA53).